The sequence spans 289 residues: 3-methyl-2-oxobutanoate hydroxymethyltransferase (289 aa).

Positions 1 to 15 (MSTTFKLDTSTSRAN) are enriched in polar residues. The disordered stretch occupies residues 1-21 (MSTTFKLDTSTSRANPTPAPM). Mg(2+) contacts are provided by Asp-67 and Asp-106. 3-methyl-2-oxobutanoate is bound by residues 67-68 (DS), Asp-106, and Lys-136. Glu-138 provides a ligand contact to Mg(2+). Catalysis depends on Glu-205, which acts as the Proton acceptor.

The protein belongs to the PanB family. Homodecamer; pentamer of dimers. Requires Mg(2+) as cofactor.

The protein localises to the cytoplasm. The catalysed reaction is 3-methyl-2-oxobutanoate + (6R)-5,10-methylene-5,6,7,8-tetrahydrofolate + H2O = 2-dehydropantoate + (6S)-5,6,7,8-tetrahydrofolate. It participates in cofactor biosynthesis; (R)-pantothenate biosynthesis; (R)-pantoate from 3-methyl-2-oxobutanoate: step 1/2. Catalyzes the reversible reaction in which hydroxymethyl group from 5,10-methylenetetrahydrofolate is transferred onto alpha-ketoisovalerate to form ketopantoate. The sequence is that of 3-methyl-2-oxobutanoate hydroxymethyltransferase from Erythrobacter litoralis (strain HTCC2594).